Reading from the N-terminus, the 565-residue chain is Heme/hemopexin transporter protein HuxB (565 aa).

Positions 1–26 are cleaved as a signal peptide; it reads MKMRPRYSVIASAVSLGFVLSKSVMA. The POTRA domain maps to 73 to 150; the sequence is FPLKQVQILD…GTVKILLLKG (78 aa).

Belongs to the TPS (TC 1.B.20) family.

It is found in the cell outer membrane. Likely functions in the release of soluble HxuA from the cell. In terms of biological role, probable member of a two partner secretion pathway (TPS) in which it mediates the secretion of HuxA. The sequence is that of Heme/hemopexin transporter protein HuxB (hxuB) from Haemophilus influenzae (strain ATCC 51907 / DSM 11121 / KW20 / Rd).